A 137-amino-acid polypeptide reads, in one-letter code: Probable 4-amino-4-deoxy-L-arabinose-phosphoundecaprenol flippase subunit ArnF (137 aa).

The Cytoplasmic portion of the chain corresponds to 1 to 5 (MNVPR). Residues 6-26 (GWLAALGSVLLVSAAQLGMRW) traverse the membrane as a helical segment. Residues 27–44 (GMSRLPLPEAWAGQTPEH) are Periplasmic-facing. Residues 45-65 (AALLAVALAVAAYAASLLCWL) traverse the membrane as a helical segment. Over 66–76 (AALRHLPLGRA) the chain is Cytoplasmic. The helical transmembrane segment at 77–97 (YSLLSASYALVYLLAASLPAF) threads the bilayer. Topologically, residues 98–100 (EET) are periplasmic. A helical transmembrane segment spans residues 101 to 121 (FTTGKTLGVGLVVLGVLTVNA). Residues 122-137 (RRTAAAPAHHPSRKAL) are Cytoplasmic-facing.

Belongs to the ArnF family. As to quaternary structure, heterodimer of ArnE and ArnF.

The protein resides in the cell inner membrane. It functions in the pathway bacterial outer membrane biogenesis; lipopolysaccharide biosynthesis. In terms of biological role, translocates 4-amino-4-deoxy-L-arabinose-phosphoundecaprenol (alpha-L-Ara4N-phosphoundecaprenol) from the cytoplasmic to the periplasmic side of the inner membrane. The protein is Probable 4-amino-4-deoxy-L-arabinose-phosphoundecaprenol flippase subunit ArnF of Pseudomonas paraeruginosa (strain DSM 24068 / PA7) (Pseudomonas aeruginosa (strain PA7)).